We begin with the raw amino-acid sequence, 336 residues long: tRNA N6-adenosine threonylcarbamoyltransferase (336 aa).

His-112 and His-116 together coordinate Fe cation. Substrate is bound by residues 136 to 140 (LVSGG), Asp-169, Gly-182, and Asn-276. Position 304 (Asp-304) interacts with Fe cation.

This sequence belongs to the KAE1 / TsaD family. Requires Fe(2+) as cofactor.

Its subcellular location is the cytoplasm. It catalyses the reaction L-threonylcarbamoyladenylate + adenosine(37) in tRNA = N(6)-L-threonylcarbamoyladenosine(37) in tRNA + AMP + H(+). Required for the formation of a threonylcarbamoyl group on adenosine at position 37 (t(6)A37) in tRNAs that read codons beginning with adenine. Is involved in the transfer of the threonylcarbamoyl moiety of threonylcarbamoyl-AMP (TC-AMP) to the N6 group of A37, together with TsaE and TsaB. TsaD likely plays a direct catalytic role in this reaction. This chain is tRNA N6-adenosine threonylcarbamoyltransferase, found in Francisella tularensis subsp. tularensis (strain FSC 198).